A 533-amino-acid polypeptide reads, in one-letter code: Undecaprenyl phosphate-alpha-4-amino-4-deoxy-L-arabinose arabinosyl transferase (533 aa).

Helical transmembrane passes span 10–30 (LLLAAFLLAYLLPLGFHGLWI), 64–84 (PAGYWLIALGQAVFGENLFGV), 86–106 (IASAISTGLSVLLAYLLAGKI), 113–133 (SFASALLFMSFGFVAGQAGYS), 137–157 (PQFTLWTNLTLVAFWYAVHSI), 170–190 (VACGMGFMTKGFLAWALPAII), 207–227 (FGPLAVVIAIAVCLPWALAVH), 257–277 (WWFYLPLLIAACLPWALLLPV), 290–310 (DTAFLLLWLVLPLAFLSLSKG), 312–332 (LPTYILPCLLPLALLMADALV), 345–365 (VNGIVNAALTFLGLLALIYVQ), 377–397 (HLLLAVIVLTGWTLTNALQGI), and 402–422 (FWALPAVGSWLLIVLLPAALP).

Belongs to the glycosyltransferase 83 family.

Its subcellular location is the cell inner membrane. It catalyses the reaction 4-amino-4-deoxy-alpha-L-arabinopyranosyl di-trans,octa-cis-undecaprenyl phosphate + lipid IVA = lipid IIA + di-trans,octa-cis-undecaprenyl phosphate.. Its pathway is lipopolysaccharide metabolism; 4-amino-4-deoxy-beta-L-arabinose-lipid A biosynthesis. In terms of biological role, catalyzes the transfer of the L-Ara4N moiety of the glycolipid undecaprenyl phosphate-alpha-L-Ara4N to lipid A. The modified arabinose is attached to lipid A and is required for resistance to polymyxin and cationic antimicrobial peptides. This Pseudomonas savastanoi pv. phaseolicola (strain 1448A / Race 6) (Pseudomonas syringae pv. phaseolicola (strain 1448A / Race 6)) protein is Undecaprenyl phosphate-alpha-4-amino-4-deoxy-L-arabinose arabinosyl transferase.